Reading from the N-terminus, the 627-residue chain is ATP-dependent zinc metalloprotease FtsH 2 (627 aa).

Topologically, residues M1–T7 are cytoplasmic. The chain crosses the membrane as a helical span at residues A8–G28. Topologically, residues G29 to V117 are lumenal. A helical membrane pass occupies residues W118–F138. The Cytoplasmic segment spans residues R139–L627. Residue G212–T219 coordinates ATP. H433 is a binding site for Zn(2+). The active site involves E434. The Zn(2+) site is built by H437 and D511.

It in the central section; belongs to the AAA ATPase family. In the C-terminal section; belongs to the peptidase M41 family. In terms of assembly, homohexamer (Potential). Part of a large (&gt;500 kDa) complex that includes FtsH3 and PSII. Coimmunoprecipitates with YidC. The cofactor is Zn(2+).

Its subcellular location is the cellular thylakoid membrane. Functionally, acts as a processive, ATP-dependent zinc metallopeptidase for both cytoplasmic and membrane proteins. Plays a role in the quality control of integral membrane proteins. Plays a role in the selective replacement of photosystem II (PSII) protein D1 in the PSII repair cycle following visible-light and UV-B induced damage. If damaged D1 is not removed then new D1 cannot be inserted to restore the PSII reaction center. Seems to also degrade damaged and/or unassembled PSII proteins D2 and PsbB (CP47). May recognize D1 via its first 20 amino acids, as deletion of these prevents the PSII repair cycle. Also seems to degrade cytoplasmic GGPS, glucosylglycerol-phosphate synthase. This chain is ATP-dependent zinc metalloprotease FtsH 2 (ftsH2), found in Synechocystis sp. (strain ATCC 27184 / PCC 6803 / Kazusa).